Reading from the N-terminus, the 248-residue chain is Putative TrmH family tRNA/rRNA methyltransferase (248 aa).

S-adenosyl-L-methionine-binding residues include glycine 196, isoleucine 216, and leucine 225.

This sequence belongs to the class IV-like SAM-binding methyltransferase superfamily. RNA methyltransferase TrmH family.

This Staphylococcus aureus (strain Mu50 / ATCC 700699) protein is Putative TrmH family tRNA/rRNA methyltransferase.